The primary structure comprises 183 residues: Intermembrane phospholipid transport system binding protein MlaD (183 aa).

Residues 1–7 (MQTKKNE) are Cytoplasmic-facing. A helical; Signal-anchor for type II membrane protein transmembrane segment spans residues 8 to 28 (IWVGIFLLAALLAALFVCLKA). The Periplasmic segment spans residues 29–183 (ANVTSIRTEP…ETTEPVGTTK (155 aa)). The MCE/MlaD stretch occupies residues 39–116 (TYTLYATFDN…LGEQYLALNV (78 aa)). The interval 155-183 (KGDDNKNSGDAPAAAPGNNETTEPVGTTK) is disordered. The span at 172–183 (NNETTEPVGTTK) shows a compositional bias: polar residues.

The protein belongs to the MlaD family. The complex is composed of two ATP-binding proteins (MlaF), two transmembrane proteins (MlaE), two cytoplasmic solute-binding proteins (MlaB) and six periplasmic solute-binding proteins (MlaD).

The protein resides in the cell inner membrane. Functionally, part of the ABC transporter complex MlaFEDB, which is involved in a phospholipid transport pathway that maintains lipid asymmetry in the outer membrane by retrograde trafficking of phospholipids from the outer membrane to the inner membrane. MlaD functions in substrate binding with strong affinity for phospholipids and modulates ATP hydrolytic activity of the complex. In Escherichia coli O157:H7, this protein is Intermembrane phospholipid transport system binding protein MlaD.